Reading from the N-terminus, the 204-residue chain is MSVSMDHRVLALAGVAQALQQVRRIAETGHSEAATVRTAMDSVFRVDAASPEAVYGSAAALAPGLRLLHNYFRNQGQDEVLPRLALAVLQLERRFVRDTSTVATVASGIDAAARQAQQLGDSSHPDVLSSLGGLYAQTISHLRPKVMVQGNPHYLGQAGVVAEIRALLLAAVRSAVLWRQMGGNLWDFLFAKRAMIEAVDRALR.

The protein belongs to the HflD family.

Its subcellular location is the cytoplasm. It is found in the cell inner membrane. The protein is High frequency lysogenization protein HflD homolog of Xanthomonas euvesicatoria pv. vesicatoria (strain 85-10) (Xanthomonas campestris pv. vesicatoria).